The sequence spans 418 residues: Serine protease inhibitor A3N (418 aa).

Positions 1–29 are cleaved as a signal peptide; that stretch reads MTRLVTLELLMAGIGSALLCFPDCILGED. Ser93 bears the Phosphoserine mark. Asn104, Asn258, and Asn269 each carry an N-linked (GlcNAc...) asparagine glycan. Residues 367–394 form an RCL region; it reads GTEAAAATGVKFVPMSAKLDPLIIAFDR.

This sequence belongs to the serpin family. N-glycosylated. In terms of tissue distribution, liver.

It is found in the secreted. This chain is Serine protease inhibitor A3N (Serpina3n), found in Rattus norvegicus (Rat).